Here is a 438-residue protein sequence, read N- to C-terminus: Xylose isomerase (438 aa).

Active-site residues include His-100 and Asp-103. Mg(2+)-binding residues include Glu-231, Glu-267, His-270, Asp-295, Asp-306, Asp-308, and Asp-338.

This sequence belongs to the xylose isomerase family. Homotetramer. The cofactor is Mg(2+).

It localises to the cytoplasm. The catalysed reaction is alpha-D-xylose = alpha-D-xylulofuranose. The protein is Xylose isomerase of Pseudomonas fluorescens (strain Pf0-1).